A 224-amino-acid polypeptide reads, in one-letter code: UPF0758 protein Pmen_4376 (224 aa).

Residues Ala-102–Met-224 enclose the MPN domain. Zn(2+)-binding residues include His-173, His-175, and Asp-186. Residues His-173–Asp-186 carry the JAMM motif motif.

It belongs to the UPF0758 family.

This chain is UPF0758 protein Pmen_4376, found in Ectopseudomonas mendocina (strain ymp) (Pseudomonas mendocina).